Here is a 283-residue protein sequence, read N- to C-terminus: Phosphatidylserine decarboxylase proenzyme (283 aa).

Residues Asp-96, His-152, and Ser-250 each act as charge relay system; for autoendoproteolytic cleavage activity in the active site. The Schiff-base intermediate with substrate; via pyruvic acid; for decarboxylase activity role is filled by Ser-250. Pyruvic acid (Ser); by autocatalysis is present on Ser-250.

It belongs to the phosphatidylserine decarboxylase family. PSD-B subfamily. Prokaryotic type I sub-subfamily. In terms of assembly, heterodimer of a large membrane-associated beta subunit and a small pyruvoyl-containing alpha subunit. Pyruvate serves as cofactor. Post-translationally, is synthesized initially as an inactive proenzyme. Formation of the active enzyme involves a self-maturation process in which the active site pyruvoyl group is generated from an internal serine residue via an autocatalytic post-translational modification. Two non-identical subunits are generated from the proenzyme in this reaction, and the pyruvate is formed at the N-terminus of the alpha chain, which is derived from the carboxyl end of the proenzyme. The autoendoproteolytic cleavage occurs by a canonical serine protease mechanism, in which the side chain hydroxyl group of the serine supplies its oxygen atom to form the C-terminus of the beta chain, while the remainder of the serine residue undergoes an oxidative deamination to produce ammonia and the pyruvoyl prosthetic group on the alpha chain. During this reaction, the Ser that is part of the protease active site of the proenzyme becomes the pyruvoyl prosthetic group, which constitutes an essential element of the active site of the mature decarboxylase.

It localises to the cell membrane. The catalysed reaction is a 1,2-diacyl-sn-glycero-3-phospho-L-serine + H(+) = a 1,2-diacyl-sn-glycero-3-phosphoethanolamine + CO2. It participates in phospholipid metabolism; phosphatidylethanolamine biosynthesis; phosphatidylethanolamine from CDP-diacylglycerol: step 2/2. Catalyzes the formation of phosphatidylethanolamine (PtdEtn) from phosphatidylserine (PtdSer). The polypeptide is Phosphatidylserine decarboxylase proenzyme (Acinetobacter baumannii (strain AB0057)).